The primary structure comprises 225 residues: UPF0173 metal-dependent hydrolase Tneu_1348 (225 aa).

This sequence belongs to the UPF0173 family.

The protein is UPF0173 metal-dependent hydrolase Tneu_1348 of Pyrobaculum neutrophilum (strain DSM 2338 / JCM 9278 / NBRC 100436 / V24Sta) (Thermoproteus neutrophilus).